The chain runs to 141 residues: Cystatin-13 (141 aa).

The first 24 residues, 1–24, serve as a signal peptide directing secretion; it reads MARFLQTLLFLVIMVEFVSRRVEA. The tract at residues 76–80 is secondary area of contact; that stretch reads QITDS. 2 disulfides stabilise this stretch: C94/C104 and C118/C138.

Belongs to the cystatin family. Expressed exclusively in testis. Found in spermatagonia, spermatocytes, round spermatids, elongating spermatids and spermatozoa.

It localises to the secreted. It is found in the cytoplasm. May perform a specialized role during sperm development and maturation. The polypeptide is Cystatin-13 (Mus musculus (Mouse)).